Here is a 352-residue protein sequence, read N- to C-terminus: MTEYKLALVGFGGVNRALAQLIAERNQQWKTELGFTLKIVGVTDLFLGSVMNRHGLDAASLARLPASKGAMAQLPGGTVDALNEAVIKDCGADIIAEATFTNPVDGEPATSFCRWALERGKHVVTTNKGPIALHGAELKALARCNNVAFEYEGSVMSGTPVIRLAKQALAGSSITGFEGILNGTSNFVLTAMEGGLGFAEAVSQAQALGYAEADPTADVEGHDVRLKVVILANELLDAKLTVNDVSCKGISALSLDDIEKARRDNARWKLIGAATRNADGSISASVEPRLLSNDHPLASISSATNAVSFTSELLGAVTVSGPGAGRTETAFALLSDIIHIHQSATRKQEHTL.

This sequence belongs to the homoserine dehydrogenase family.

The catalysed reaction is L-homoserine + NAD(+) = L-aspartate 4-semialdehyde + NADH + H(+). In terms of biological role, dehydrogenase involved in the degradation of canavanine, the delta-oxa-analog of arginine, allowing growth on canavanine as sole nitrogen and carbon source. Catalyzes the conversion of homoserine and NAD(+) to aspartate-semialdehyde and NADH. Is highly specific for NAD(+) and cannot use NADP(+). This Pseudomonas canavaninivorans protein is NAD(+)-dependent homoserine dehydrogenase.